The following is a 257-amino-acid chain: DNA repair protein RecO (257 aa).

It belongs to the RecO family.

Its function is as follows. Involved in DNA repair and RecF pathway recombination. The sequence is that of DNA repair protein RecO from Streptococcus thermophilus (strain CNRZ 1066).